The sequence spans 269 residues: tRNA pseudouridine synthase A (269 aa).

The Nucleophile role is filled by Asp-52. Tyr-110 contacts substrate.

It belongs to the tRNA pseudouridine synthase TruA family. Homodimer.

The enzyme catalyses uridine(38/39/40) in tRNA = pseudouridine(38/39/40) in tRNA. Functionally, formation of pseudouridine at positions 38, 39 and 40 in the anticodon stem and loop of transfer RNAs. The sequence is that of tRNA pseudouridine synthase A from Bacteroides thetaiotaomicron (strain ATCC 29148 / DSM 2079 / JCM 5827 / CCUG 10774 / NCTC 10582 / VPI-5482 / E50).